Consider the following 775-residue polypeptide: DNA polymerase (775 aa).

The protein belongs to the DNA polymerase type-B family. In terms of assembly, monomer.

It catalyses the reaction DNA(n) + a 2'-deoxyribonucleoside 5'-triphosphate = DNA(n+1) + diphosphate. Its function is as follows. In addition to polymerase activity, this DNA polymerase exhibits 3' to 5' exonuclease activity. This Pyrococcus glycovorans protein is DNA polymerase (pol).